The primary structure comprises 431 residues: Phosphate regulon sensor protein PhoR (431 aa).

At 1–13 (MLERLSWKRLALE) the chain is on the cytoplasmic side. The helical transmembrane segment at 14–34 (LFLACIPALILGAFVGHLPWF) threads the bilayer. At 35–38 (LLAA) the chain is on the periplasmic side. The helical transmembrane segment at 39-59 (VTGLLIWHFWNLMRLSWWLWV) threads the bilayer. At 60-431 (DRSMTPPPGR…PERLIARNDA (372 aa)) the chain is on the cytoplasmic side. Positions 98–166 (KRFRSGAESL…KQRDFSKPLN (69 aa)) constitute a PAS domain. Residues 210–425 (NVSHELRTPL…RFSFLLPERL (216 aa)) enclose the Histidine kinase domain. A Phosphohistidine; by autocatalysis modification is found at H213.

The protein localises to the cell inner membrane. The catalysed reaction is ATP + protein L-histidine = ADP + protein N-phospho-L-histidine.. Functionally, member of the two-component regulatory system PhoR/PhoB involved in the phosphate regulon genes expression. PhoR may function as a membrane-associated protein kinase that phosphorylates PhoB in response to environmental signals. This chain is Phosphate regulon sensor protein PhoR (phoR), found in Klebsiella pneumoniae.